The following is a 224-amino-acid chain: Aminopyrimidine aminohydrolase (224 aa).

Asp-44 is a binding site for substrate. The active-site Nucleophile is the Cys-135. Substrate-binding residues include Tyr-139 and Tyr-165. Residue Glu-207 is the Proton donor of the active site.

The protein belongs to the TenA family. Homotetramer.

The enzyme catalyses 4-amino-5-aminomethyl-2-methylpyrimidine + H2O = 4-amino-5-hydroxymethyl-2-methylpyrimidine + NH4(+). The catalysed reaction is thiamine + H2O = 5-(2-hydroxyethyl)-4-methylthiazole + 4-amino-5-hydroxymethyl-2-methylpyrimidine + H(+). It participates in cofactor biosynthesis; thiamine diphosphate biosynthesis. Catalyzes an amino-pyrimidine hydrolysis reaction at the C5' of the pyrimidine moiety of thiamine compounds, a reaction that is part of a thiamine salvage pathway. Thus, catalyzes the conversion of 4-amino-5-aminomethyl-2-methylpyrimidine to 4-amino-5-hydroxymethyl-2-methylpyrimidine (HMP). To a lesser extent, is also able to catalyze the hydrolytic cleavage of thiamine; however, this thiaminase activity is unlikely to be physiologically relevant. Therefore, is involved in the regeneration of the thiamine pyrimidine from thiamine degraded products present in the environment, rather than in thiamine degradation. This is Aminopyrimidine aminohydrolase from Halalkalibacterium halodurans (strain ATCC BAA-125 / DSM 18197 / FERM 7344 / JCM 9153 / C-125) (Bacillus halodurans).